We begin with the raw amino-acid sequence, 221 residues long: Probable septum site-determining protein MinC (221 aa).

Belongs to the MinC family. As to quaternary structure, interacts with MinD and FtsZ.

Cell division inhibitor that blocks the formation of polar Z ring septums. Rapidly oscillates between the poles of the cell to destabilize FtsZ filaments that have formed before they mature into polar Z rings. Prevents FtsZ polymerization. This chain is Probable septum site-determining protein MinC, found in Shewanella sp. (strain ANA-3).